An 863-amino-acid polypeptide reads, in one-letter code: Leucine--tRNA ligase (863 aa).

Residues 40-51 carry the 'HIGH' region motif; sequence PYPSGAGLHVGH. The 'KMSKS' region signature appears at 635–639; sequence KMSKS. Position 638 (Lys638) interacts with ATP.

It belongs to the class-I aminoacyl-tRNA synthetase family.

It is found in the cytoplasm. The catalysed reaction is tRNA(Leu) + L-leucine + ATP = L-leucyl-tRNA(Leu) + AMP + diphosphate. This is Leucine--tRNA ligase from Leptospira interrogans serogroup Icterohaemorrhagiae serovar Lai (strain 56601).